A 462-amino-acid chain; its full sequence is Elongation factor 1-alpha (462 aa).

Residue Gly2 is modified to Blocked amino end (Gly). One can recognise a tr-type G domain in the interval 5 to 242 (KIHINIVVIG…DAILPPSRPT (238 aa)). The tract at residues 14–21 (GHVDSGKS) is G1. 14–21 (GHVDSGKS) is a GTP binding site. N6,N6,N6-trimethyllysine is present on Lys36. Lys55 carries the post-translational modification N6-methyllysine. A G2 region spans residues 70 to 74 (GITID). Lys79 carries the post-translational modification N6,N6,N6-trimethyllysine. The G3 stretch occupies residues 91–94 (DAPG). Residues 91–95 (DAPGH) and 153–156 (NKMD) contribute to the GTP site. The tract at residues 153 to 156 (NKMD) is G4. Positions 194 to 196 (SGW) are G5. An N6,N6,N6-trimethyllysine mark is found at Lys219 and Lys318. Glu374 is modified (5-glutamyl glycerylphosphorylethanolamine).

It belongs to the TRAFAC class translation factor GTPase superfamily. Classic translation factor GTPase family. EF-Tu/EF-1A subfamily. The N-terminus is blocked.

It is found in the cytoplasm. Its function is as follows. This protein promotes the GTP-dependent binding of aminoacyl-tRNA to the A-site of ribosomes during protein biosynthesis. The chain is Elongation factor 1-alpha from Artemia salina (Brine shrimp).